Consider the following 462-residue polypeptide: Bifunctional protein GlmU (462 aa).

The segment at 1 to 239 is pyrophosphorylase; that stretch reads MTESVSKPVR…EASVQGVNAQ (239 aa). UDP-N-acetyl-alpha-D-glucosamine contacts are provided by residues 17 to 20, K31, Q84, and 89 to 90; these read LAAG and GT. D114 contacts Mg(2+). Positions 150, 165, 180, and 237 each coordinate UDP-N-acetyl-alpha-D-glucosamine. Mg(2+) is bound at residue N237. The linker stretch occupies residues 240 to 260; it reads AELAAAEAVWQQNRRKALMVD. The segment at 261–462 is N-acetyltransferase; that stretch reads GVTMPAPDTV…QKDKKKDKKA (202 aa). R326 and K344 together coordinate UDP-N-acetyl-alpha-D-glucosamine. H356 functions as the Proton acceptor in the catalytic mechanism. Residues Y359 and N370 each coordinate UDP-N-acetyl-alpha-D-glucosamine. Acetyl-CoA is bound by residues A373, 379 to 380, S398, S416, and R433; that span reads NY.

This sequence in the N-terminal section; belongs to the N-acetylglucosamine-1-phosphate uridyltransferase family. In the C-terminal section; belongs to the transferase hexapeptide repeat family. In terms of assembly, homotrimer. Mg(2+) is required as a cofactor.

It is found in the cytoplasm. The enzyme catalyses alpha-D-glucosamine 1-phosphate + acetyl-CoA = N-acetyl-alpha-D-glucosamine 1-phosphate + CoA + H(+). The catalysed reaction is N-acetyl-alpha-D-glucosamine 1-phosphate + UTP + H(+) = UDP-N-acetyl-alpha-D-glucosamine + diphosphate. Its pathway is nucleotide-sugar biosynthesis; UDP-N-acetyl-alpha-D-glucosamine biosynthesis; N-acetyl-alpha-D-glucosamine 1-phosphate from alpha-D-glucosamine 6-phosphate (route II): step 2/2. It participates in nucleotide-sugar biosynthesis; UDP-N-acetyl-alpha-D-glucosamine biosynthesis; UDP-N-acetyl-alpha-D-glucosamine from N-acetyl-alpha-D-glucosamine 1-phosphate: step 1/1. The protein operates within bacterial outer membrane biogenesis; LPS lipid A biosynthesis. Functionally, catalyzes the last two sequential reactions in the de novo biosynthetic pathway for UDP-N-acetylglucosamine (UDP-GlcNAc). The C-terminal domain catalyzes the transfer of acetyl group from acetyl coenzyme A to glucosamine-1-phosphate (GlcN-1-P) to produce N-acetylglucosamine-1-phosphate (GlcNAc-1-P), which is converted into UDP-GlcNAc by the transfer of uridine 5-monophosphate (from uridine 5-triphosphate), a reaction catalyzed by the N-terminal domain. This chain is Bifunctional protein GlmU, found in Caulobacter vibrioides (strain ATCC 19089 / CIP 103742 / CB 15) (Caulobacter crescentus).